Here is a 191-residue protein sequence, read N- to C-terminus: Putative RNA-binding protein EEED8.4 (191 aa).

An RRM domain is found at 55–132 (KSVFIGNVDF…RPIVVTAKRT (78 aa)). The disordered stretch occupies residues 136-160 (GMGHGVRGSSRGTFGRGRGAARGAP).

The sequence is that of Putative RNA-binding protein EEED8.4 from Caenorhabditis elegans.